Reading from the N-terminus, the 819-residue chain is Protein EFR3 homolog A (819 aa).

Residues serine 360, serine 363, serine 420, and serine 692 each carry the phosphoserine modification.

This sequence belongs to the EFR3 family. In terms of assembly, component of a phosphatidylinositol 4-kinase (PI4K) complex, composed of PI4KA, EFR3 (EFR3A or EFR3B), TTC7 (TTC7A or TTC7B) and HYCC (HYCC1 or HYCC2). In terms of processing, palmitoylated at its N-terminus, anchoring the protein to the plasma membrane. As to expression, widely expressed. Expressed in neurons of the superior olivary complex of the auditory brainstem. Also expressed at lower levels in the cochlear nucleus, the lateral leminiscal nuclei and the inferior collicus.

It localises to the cell membrane. The protein resides in the cytoplasm. Its subcellular location is the cytosol. Its function is as follows. Component of a complex required to localize phosphatidylinositol 4-kinase (PI4K) to the plasma membrane. The complex acts as a regulator of phosphatidylinositol 4-phosphate (PtdIns(4)P) synthesis. In the complex, EFR3A probably acts as the membrane-anchoring component. Also involved in responsiveness to G-protein-coupled receptors; it is however unclear whether this role is direct or indirect. This chain is Protein EFR3 homolog A, found in Mus musculus (Mouse).